The following is a 312-amino-acid chain: tRNA-cytidine(32) 2-sulfurtransferase (312 aa).

A PP-loop motif motif is present at residues 39 to 44 (SGGKDS). Positions 114, 117, and 205 each coordinate [4Fe-4S] cluster.

The protein belongs to the TtcA family. In terms of assembly, homodimer. Mg(2+) serves as cofactor. It depends on [4Fe-4S] cluster as a cofactor.

The protein localises to the cytoplasm. It carries out the reaction cytidine(32) in tRNA + S-sulfanyl-L-cysteinyl-[cysteine desulfurase] + AH2 + ATP = 2-thiocytidine(32) in tRNA + L-cysteinyl-[cysteine desulfurase] + A + AMP + diphosphate + H(+). It functions in the pathway tRNA modification. Its function is as follows. Catalyzes the ATP-dependent 2-thiolation of cytidine in position 32 of tRNA, to form 2-thiocytidine (s(2)C32). The sulfur atoms are provided by the cysteine/cysteine desulfurase (IscS) system. This chain is tRNA-cytidine(32) 2-sulfurtransferase, found in Ralstonia nicotianae (strain ATCC BAA-1114 / GMI1000) (Ralstonia solanacearum).